A 125-amino-acid chain; its full sequence is Small ribosomal subunit protein uS12 (125 aa).

Asp-89 carries the post-translational modification 3-methylthioaspartic acid. Residues Leu-104–Ala-125 are disordered. The span at Ser-113 to Ala-125 shows a compositional bias: basic residues.

The protein belongs to the universal ribosomal protein uS12 family. As to quaternary structure, part of the 30S ribosomal subunit. Contacts proteins S8 and S17. May interact with IF1 in the 30S initiation complex.

In terms of biological role, with S4 and S5 plays an important role in translational accuracy. Its function is as follows. Interacts with and stabilizes bases of the 16S rRNA that are involved in tRNA selection in the A site and with the mRNA backbone. Located at the interface of the 30S and 50S subunits, it traverses the body of the 30S subunit contacting proteins on the other side and probably holding the rRNA structure together. The combined cluster of proteins S8, S12 and S17 appears to hold together the shoulder and platform of the 30S subunit. This chain is Small ribosomal subunit protein uS12, found in Leptothrix cholodnii (strain ATCC 51168 / LMG 8142 / SP-6) (Leptothrix discophora (strain SP-6)).